Reading from the N-terminus, the 811-residue chain is DEP domain-containing protein 1A (811 aa).

The 85-residue stretch at 24–108 folds into the DEP domain; that stretch reads FRAGMPLRKH…DNNQLFRFPA (85 aa). Residues 281–321 form the Rho-GAP domain; the sequence is DYFLDLPEPLLTFEYYELFVNILVVCGYITVSDRSSGIHKI. A Phosphoserine modification is found at Ser-512. The interaction with ZNF224 stretch occupies residues 598–653; it reads AIDALQLCCLLLPPPNRRKLQLLMRMISRMSQNVDMPKLHDAMGTRSLMIHTFSRC.

As to quaternary structure, isoform 2 and isoform 5 can form homodimers and heterodimers. Interacts with ZNF224. In terms of tissue distribution, expressed in testis. Up-regulated in bladder cancer cells (at protein level).

The protein localises to the nucleus. Its function is as follows. May be involved in transcriptional regulation as a transcriptional corepressor. The DEPDC1A-ZNF224 complex may play a critical role in bladder carcinogenesis by repressing the transcription of the A20 gene, leading to transport of NF-KB protein into the nucleus, resulting in suppression of apoptosis of bladder cancer cells. This chain is DEP domain-containing protein 1A (DEPDC1), found in Homo sapiens (Human).